Consider the following 259-residue polypeptide: Submandibular glandular kallikrein-9 (259 aa).

The N-terminal stretch at 1–18 is a signal peptide; sequence MWFLILFLALSLGQIDAA. A propeptide spans 19–24 (activation peptide); sequence PPGQSR. Residues 25–256 enclose the Peptidase S1 domain; sequence VVGGYNCETN…FTSWIKKVMK (232 aa). 5 disulfides stabilise this stretch: C31-C171, C48-C64, C150-C217, C182-C196, and C207-C232. H63 functions as the Charge relay system in the catalytic mechanism. A glycan (N-linked (GlcNAc...) asparagine) is linked at N106. The active-site Charge relay system is the D118. S211 (charge relay system) is an active-site residue.

Belongs to the peptidase S1 family. Kallikrein subfamily. As to quaternary structure, heterodimer of a light chain and heavy chain linked by a disulfide bond.

The catalysed reaction is Preferential cleavage of Arg-|-Xaa bonds in small molecule substrates. Highly selective action to release kallidin (lysyl-bradykinin) from kininogen involves hydrolysis of Met-|-Xaa or Leu-|-Xaa.. Glandular kallikreins cleave Met-Lys and Arg-Ser bonds in kininogen to release Lys-bradykinin. This enzyme has a vasoconstrictor activity. KLK-9 has both a chymotrypsin-like and a trypsin-like properties. In Rattus norvegicus (Rat), this protein is Submandibular glandular kallikrein-9 (Klk9).